The following is a 114-amino-acid chain: Cell division protein FtsB (114 aa).

Topologically, residues 1–3 (MGK) are cytoplasmic. Residues 4–21 (LTLLLVVLLGWLQYSLWV) form a helical membrane-spanning segment. Residues 22–114 (GKNGVHDYMR…ASYPSVTASH (93 aa)) lie on the Periplasmic side of the membrane. The stretch at 31 to 62 (RVKQDVATQQANNAKLKSRNDQLFAEIDDLNG) forms a coiled coil.

The protein belongs to the FtsB family. As to quaternary structure, part of a complex composed of FtsB, FtsL and FtsQ.

The protein resides in the cell inner membrane. In terms of biological role, essential cell division protein. May link together the upstream cell division proteins, which are predominantly cytoplasmic, with the downstream cell division proteins, which are predominantly periplasmic. The polypeptide is Cell division protein FtsB (Edwardsiella ictaluri (strain 93-146)).